We begin with the raw amino-acid sequence, 207 residues long: MTMDGDSSTTDASQLGISADYIGGSHYVIQPHDDTEDSMNDHEDTNGSKESFREQDIYLPIANVARIMKNAIPQTGKIAKDAKECVQECVSEFISFITSEASERCHQEKRKTINGEDILFAMSTLGFDSYVEPLKLYLQKFREAMKGEKGIGGAVSATDGLSEELTEEAFTNQLPAGLITADGQQQNVMVYTTSYQQISGVQQIQFS.

Residues 1–52 (MTMDGDSSTTDASQLGISADYIGGSHYVIQPHDDTEDSMNDHEDTNGSKESF) are a domain. Positions 27–52 (YVIQPHDDTEDSMNDHEDTNGSKESF) are disordered. Residues 39 to 52 (MNDHEDTNGSKESF) are compositionally biased toward basic and acidic residues. Residues 53–142 (REQDIYLPIA…PLKLYLQKFR (90 aa)) form a b domain region. The DNA-binding element occupies 59-65 (LPIANVA). Positions 86–97 (VQECVSEFISFI) are subunit association domain (SAD). A Glycyl lysine isopeptide (Lys-Gly) (interchain with G-Cter in ubiquitin) cross-link involves residue lysine 140. The segment at 143 to 207 (EAMKGEKGIG…ISGVQQIQFS (65 aa)) is c domain.

It belongs to the NFYB/HAP3 subunit family. Heterotrimeric transcription factor composed of three components, NF-YA, NF-YB and NF-YC. NF-YB and NF-YC must interact and dimerize for NF-YA association and DNA binding. Interacts with C1QBP. Monoubiquitination at Lys-140 plays an important role in transcriptional activation by allowing the deposition of histone H3 methylations as well as histone H2B monoubiquitination at 'Lys-121'.

Its subcellular location is the nucleus. Its function is as follows. Component of the sequence-specific heterotrimeric transcription factor (NF-Y) which specifically recognizes a 5'-CCAAT-3' box motif found in the promoters of its target genes. NF-Y can function as both an activator and a repressor, depending on its interacting cofactors. The protein is Nuclear transcription factor Y subunit beta (Nfyb) of Mus musculus (Mouse).